Consider the following 886-residue polypeptide: Neurotrophin 1 (886 aa).

An N-terminal signal peptide occupies residues Met-1 to Ala-29. Positions Asp-30 to Arg-498 are excised as a propeptide. N-linked (GlcNAc...) asparagine glycosylation is found at Asn-267 and Asn-317. A disordered region spans residues Phe-321–Ser-340. Asn-353 is a glycosylation site (N-linked (GlcNAc...) asparagine). The disordered stretch occupies residues Arg-369–Lys-436. The region spanning Met-508–Val-597 is the Spaetzle domain. 3 disulfide bridges follow: Cys-509-Cys-564, Cys-546-Cys-593, and Cys-553-Cys-595. An N-linked (GlcNAc...) asparagine glycan is attached at Asn-623. 2 disordered regions span residues Pro-675–Arg-754 and Val-789–Gln-886. Low complexity predominate over residues Tyr-698 to Ser-710. Residues Pro-797–Pro-807 show a composition bias toward pro residues. Basic residues-rich tracts occupy residues His-815–His-827 and Ser-874–Gln-886.

Homodimer; disulfide-linked. Detected in the fan-shaped body which is a component of the locomotion center in the central nervous system (CNS) (at protein level). Expressed in the optic lobes and brain.

Its function is as follows. Neurotrophin which may function as a ligand for the Toll-related receptors Toll-7 and Tollo. Binds to Toll-7 and probably acts as its ligand in promoting motor axon targeting and neuronal survival in the central nervous system (CNS). Involved in synaptic targeting of ISNb/d motorneurons and also some SNa motorneurons. In larvae, involved in the negative regulation of the tracheal immune response to bacterial infection perhaps by acting as a ligand for the Toll-related receptor Tollo. May be involved in the normal development of specific neurons at the neuromuscular junction. The polypeptide is Neurotrophin 1 (Drosophila melanogaster (Fruit fly)).